The sequence spans 333 residues: 4-hydroxyproline epimerase (333 aa).

Cys90 serves as the catalytic Proton acceptor. Substrate-binding positions include 91–92 (GH) and Asp249. The active-site Proton donor is Cys253. Position 254–255 (254–255 (GT)) interacts with substrate.

This sequence belongs to the proline racemase family. In terms of assembly, homodimer.

The catalysed reaction is trans-4-hydroxy-L-proline = cis-4-hydroxy-D-proline. With respect to regulation, inhibited by iodoacetate, iodoacetamide and by high amounts (10 mM) of pyrrole-2-carboxylic acid (PYC). Not inhibited by PYC at 1 mM. In terms of biological role, allows intracellular utilization of 4-hydroxyproline, one of the major constituents of host collagen, by converting 4-hydroxy-L-proline to 4-hydroxy-D-proline, which can be further metabolized by intracellular 4-hydroxy-D-proline oxidases. Strong B-cell mitogen. Plays an important role in the regulation of intra- and extracellular amino acid pools, allowing the bacterium to profit from host precursors and enzymatic pathways. This Brucella melitensis biotype 1 (strain ATCC 23456 / CCUG 17765 / NCTC 10094 / 16M) protein is 4-hydroxyproline epimerase.